The sequence spans 218 residues: Small ribosomal subunit protein uS7m (218 aa).

A mitochondrion-targeting transit peptide spans 1–19 (MSLLGRIAEKTSRLSCLRL).

The protein belongs to the universal ribosomal protein uS7 family. As to quaternary structure, component of the mitochondrial ribosome small subunit (28S) which comprises a 12S rRNA and about 30 distinct proteins.

Its subcellular location is the mitochondrion. The polypeptide is Small ribosomal subunit protein uS7m (mRpS7) (Drosophila melanogaster (Fruit fly)).